A 185-amino-acid chain; its full sequence is MTLPRFDQIRPKIEQHIREVKDFPKKGINFRDIMPLFTNPQLVNELCVVIADHVRHTVGHVDSVAGLEARGFLFGPQVAIQLGVPFVPIRKKGKLPGATIEASYVKEYGEDRVEIQEGAIKNGDIVFLIDDLLATGGTLRAATDLVVKAGGKVGEAFVLIELAPLNGRSKLPDVNLTTLISYDSA.

Belongs to the purine/pyrimidine phosphoribosyltransferase family.

The protein resides in the cytoplasm. It carries out the reaction AMP + diphosphate = 5-phospho-alpha-D-ribose 1-diphosphate + adenine. It functions in the pathway purine metabolism; AMP biosynthesis via salvage pathway; AMP from adenine: step 1/1. Its function is as follows. Catalyzes a salvage reaction resulting in the formation of AMP, that is energically less costly than de novo synthesis. The chain is Adenine phosphoribosyltransferase (aprt-1) from Caenorhabditis elegans.